A 428-amino-acid chain; its full sequence is Histidine--tRNA ligase (428 aa).

The protein belongs to the class-II aminoacyl-tRNA synthetase family. As to quaternary structure, homodimer.

Its subcellular location is the cytoplasm. It catalyses the reaction tRNA(His) + L-histidine + ATP = L-histidyl-tRNA(His) + AMP + diphosphate + H(+). This is Histidine--tRNA ligase from Thermosynechococcus vestitus (strain NIES-2133 / IAM M-273 / BP-1).